Here is an 862-residue protein sequence, read N- to C-terminus: Leucine--tRNA ligase (862 aa).

The short motif at P42–H52 is the 'HIGH' region element. The 'KMSKS' region motif lies at K622–S626. K625 contacts ATP.

It belongs to the class-I aminoacyl-tRNA synthetase family.

The protein localises to the cytoplasm. The enzyme catalyses tRNA(Leu) + L-leucine + ATP = L-leucyl-tRNA(Leu) + AMP + diphosphate. The chain is Leucine--tRNA ligase from Vibrio campbellii (strain ATCC BAA-1116).